A 316-amino-acid chain; its full sequence is Ribosomal RNA small subunit methyltransferase H (316 aa).

Residues Ala35–His37, Asp55, Phe84, Asp105, and Gln112 each bind S-adenosyl-L-methionine.

The protein belongs to the methyltransferase superfamily. RsmH family.

The protein resides in the cytoplasm. The enzyme catalyses cytidine(1402) in 16S rRNA + S-adenosyl-L-methionine = N(4)-methylcytidine(1402) in 16S rRNA + S-adenosyl-L-homocysteine + H(+). Its function is as follows. Specifically methylates the N4 position of cytidine in position 1402 (C1402) of 16S rRNA. The chain is Ribosomal RNA small subunit methyltransferase H from Streptococcus pneumoniae serotype 4 (strain ATCC BAA-334 / TIGR4).